A 444-amino-acid chain; its full sequence is Glutamate-1-semialdehyde 2,1-aminomutase (444 aa).

At lysine 267 the chain carries N6-(pyridoxal phosphate)lysine.

This sequence belongs to the class-III pyridoxal-phosphate-dependent aminotransferase family. HemL subfamily. Homodimer. Pyridoxal 5'-phosphate is required as a cofactor.

The protein localises to the cytoplasm. It carries out the reaction (S)-4-amino-5-oxopentanoate = 5-aminolevulinate. The protein operates within porphyrin-containing compound metabolism; protoporphyrin-IX biosynthesis; 5-aminolevulinate from L-glutamyl-tRNA(Glu): step 2/2. This chain is Glutamate-1-semialdehyde 2,1-aminomutase, found in Xylella fastidiosa (strain 9a5c).